The sequence spans 132 residues: DNA-entry nuclease inhibitor (132 aa).

As to quaternary structure, this protein is a subunit of a 75 kDa protein complex, which governs binding and entry of donor DNA. The complex is a tetramer of two subunits of the DNA-entry nuclease and two subunits of a competence-specific protein. Only the complex is able to bind ds- and ss-DNA.

It is found in the cell membrane. Functionally, plays a role in the competence of cells to be transformed. It inhibits the activity of the DNA-entry nuclease. This is DNA-entry nuclease inhibitor (nin) from Bacillus subtilis (strain 168).